Consider the following 78-residue polypeptide: RNA-binding protein KhpA (78 aa).

In terms of domain architecture, KH spans 29–78; it reads TIIYELTVAKPDIGKIIGKEGRTIKAIRTLLVSVASRNNVKVSLEIMEDK.

Belongs to the KhpA RNA-binding protein family.

It is found in the cytoplasm. Its function is as follows. A probable RNA-binding protein. In Chlamydia caviae (strain ATCC VR-813 / DSM 19441 / 03DC25 / GPIC) (Chlamydophila caviae), this protein is RNA-binding protein KhpA.